Here is a 730-residue protein sequence, read N- to C-terminus: LisH domain-containing protein ARMC9 (730 aa).

In terms of domain architecture, LisH spans 7–39; that stretch reads HESELLGLVKEYLDFAEFEDTLKTFSKECKVKG. A coiled-coil region spans residues 205-242; sequence SNNKEMLQQLHQQLLEAERRAMAYLKRYNKMQADYHSL. S583 carries the phosphoserine modification. The tract at residues 675-730 is disordered; it reads QNAQQARNGCPRPIPVAQPDDYKEGKRGVAGRATPSSCKSAECAEPVLSSGAQKPK.

Interacts with TOGARAM1, CCDC66, CEP104, CSPP1 and CEP290. Interacts with NDUFAF2.

It is found in the cytoplasm. It localises to the cytoskeleton. Its subcellular location is the cilium basal body. The protein resides in the cell projection. The protein localises to the cilium. It is found in the microtubule organizing center. It localises to the centrosome. Its subcellular location is the centriole. In terms of biological role, involved in ciliogenesis. It is required for appropriate acetylation and polyglutamylation of ciliary microtubules, and regulation of cilium length. Acts as a positive regulator of hedgehog (Hh)signaling. May participate in the trafficking and/or retention of GLI2 and GLI3 proteins at the ciliary tip. This is LisH domain-containing protein ARMC9 (Armc9) from Rattus norvegicus (Rat).